Here is a 216-residue protein sequence, read N- to C-terminus: Ras-related protein RABE1d (216 aa).

Residue 22–29 (GDSGVGKS) coordinates GTP. Residues 44 to 52 (FITTIGIDF) carry the Effector region motif. GTP contacts are provided by residues 70 to 74 (DTAGQ), 128 to 131 (NKAD), and 159 to 160 (SA). The disordered stretch occupies residues 196–216 (TKQDTAASSSTAEKSACCSYV). A compositionally biased stretch (low complexity) spans 200–216 (TAASSSTAEKSACCSYV). 2 S-geranylgeranyl cysteine lipidation sites follow: Cys-212 and Cys-213.

The protein belongs to the small GTPase superfamily. Rab family. As to quaternary structure, interacts with PI5K2.

It localises to the golgi apparatus membrane. The protein localises to the cell membrane. Its function is as follows. Involved in membrane trafficking from the Golgi to the plasma membrane. The protein is Ras-related protein RABE1d (RABE1D) of Arabidopsis thaliana (Mouse-ear cress).